A 521-amino-acid polypeptide reads, in one-letter code: MSVGEDKSGTATPQHNTSIRITDDEERSDEKKFTDDDIITGCKLYVSKDGEYRLAEILQDHMKKGKKVFYVHYQEFNKRLDEWISADRIDFTRALISPQVKVDKKDDKKEGKSKTSKKSKSKNGKTGSKSVTSTPQPNEDTAPGTPRNDDEMDLDNLNVQGLKRPGEEVSREDEIKKLRTSGSMTQNHSEVARVRNLSSVILGEHIIEPWYFSPYPIELTEEDEIYICDFTLAYFGSLKQFERFRTKCSMKHPPGNEIYRDSKVSFWEIDGRKQRTWCRNLCLLSKLFLDHKTLYYDVDPFLFYIMTVKSSQGHHVVGYFSKEKESADGYNVACILTLPCYQKMGFGKLLIQFSYMLSNVENKVGSPEKPLSDLGLLSYRAFWTDTLVKLLVERNNPHLFKKNNPQLLTEASSKDSSVSPPPGGRQSANIQNGNTPSSDITIDEISSITCMTTTDILHTLTALQILRYYKGQHIIVITDHVMAMYDKLVKKIKDKKKHELDPSKLSWTPPAFTANQLRFGW.

Positions 1-32 (MSVGEDKSGTATPQHNTSIRITDDEERSDEKK) are disordered. Residues 9–20 (GTATPQHNTSIR) are compositionally biased toward polar residues. A Tudor-knot domain is found at 39–90 (ITGCKLYVSKDGEYRLAEILQDHMKKGKKVFYVHYQEFNKRLDEWISADRID). The tract at residues 100-154 (VKVDKKDDKKEGKSKTSKKSKSKNGKTGSKSVTSTPQPNEDTAPGTPRNDDEMDL) is disordered. The span at 101–113 (KVDKKDDKKEGKS) shows a compositional bias: basic and acidic residues. Positions 114-123 (KTSKKSKSKN) are enriched in basic residues. Residues 124–133 (GKTGSKSVTS) are compositionally biased toward low complexity. The MYST-type HAT domain occupies 192 to 509 (ARVRNLSSVI…LDPSKLSWTP (318 aa)). A C2HC MYST-type; degenerate zinc finger spans residues 225-250 (IYICDFTLAYFGSLKQFERFRTKCSM). The short motif at 275 to 296 (RTWCRNLCLLSKLFLDHKTLYY) is the ESA1-RPD3 motif element. K292 bears the N6-acetyllysine; by autocatalysis mark. Residues 333 to 337 (ACILT) and 342 to 348 (QKMGFGK) contribute to the acetyl-CoA site. The Proton donor/acceptor role is filled by E368. Acetyl-CoA is bound at residue S372. Composition is skewed to polar residues over residues 403-418 (NNPQLLTEASSKDSSV) and 426-436 (QSANIQNGNTP). A disordered region spans residues 403-438 (NNPQLLTEASSKDSSVSPPPGGRQSANIQNGNTPSS).

This sequence belongs to the MYST (SAS/MOZ) family. Component of the NuA4 histone acetyltransferase complex. In terms of processing, autoacetylation at Lys-292 is required for proper function.

It is found in the nucleus. Its subcellular location is the chromosome. The catalysed reaction is L-lysyl-[histone] + acetyl-CoA = N(6)-acetyl-L-lysyl-[histone] + CoA + H(+). It carries out the reaction L-lysyl-[protein] + acetyl-CoA = N(6)-acetyl-L-lysyl-[protein] + CoA + H(+). It catalyses the reaction 2-hydroxyisobutanoyl-CoA + L-lysyl-[protein] = N(6)-(2-hydroxyisobutanoyl)-L-lysyl-[protein] + CoA + H(+). The enzyme catalyses (2E)-butenoyl-CoA + L-lysyl-[protein] = N(6)-(2E)-butenoyl-L-lysyl-[protein] + CoA + H(+). In terms of biological role, catalytic component of the NuA4 histone acetyltransferase (HAT) complex which is involved in epigenetic transcriptional activation of selected genes principally by acetylation of nucleosomal histones H4, H3, H2B, H2A and H2A variant H2A.Z. Acetylates histone H4 to form H4K5ac, H4K8ac, H4K12ac and H4K16ac, histone H3 to form H3K14ac, and histone H2A to form H2AK4ac and H2AK7ac. The NuA4 complex is involved in the DNA damage response and is required for chromosome segregation. The NuA4 complex plays a direct role in repair of DNA double-strand breaks (DSBs) through homologous recombination. Recruitment to promoters depends on H3K4me. Also acetylates non-histone proteins. In addition to protein acetyltransferase, can use different acyl-CoA substrates, such as 2-hydroxyisobutanoyl-CoA (2-hydroxyisobutyryl-CoA) or (2E)-butenoyl-CoA (crotonyl-CoA), and is able to mediate protein 2-hydroxyisobutyrylation and crotonylation, respectively. The chain is Histone acetyltransferase ESA1 (ESA1) from Debaryomyces hansenii (strain ATCC 36239 / CBS 767 / BCRC 21394 / JCM 1990 / NBRC 0083 / IGC 2968) (Yeast).